A 717-amino-acid chain; its full sequence is Eukaryotic translation initiation factor 3 subunit B (717 aa).

The segment at 1-89 (MTVEDNLDID…VFIEYETGEM (89 aa)) is sufficient for interaction with HCR1 and TIF32. Positions 1 to 216 (MTVEDNLDID…GVQLWGGPDW (216 aa)) are sufficient for interaction with PIC8. Residues 28-115 (SFIVVDGAPV…HKLLVNKLSE (88 aa)) enclose the RRM domain. WD repeat units follow at residues 183–221 (RERW…PPIC), 223–284 (FQHP…PVRT), 293–332 (GASM…LLDK), 445–484 (ELKD…NRHT), 506–549 (FDKK…DRKH), and 564–609 (SEHY…QREE).

This sequence belongs to the eIF-3 subunit B family. In terms of assembly, component of the eukaryotic translation initiation factor 3 (eIF-3) complex.

The protein resides in the cytoplasm. RNA-binding component of the eukaryotic translation initiation factor 3 (eIF-3) complex, which is involved in protein synthesis of a specialized repertoire of mRNAs and, together with other initiation factors, stimulates binding of mRNA and methionyl-tRNAi to the 40S ribosome. The eIF-3 complex specifically targets and initiates translation of a subset of mRNAs involved in cell proliferation. This is Eukaryotic translation initiation factor 3 subunit B from Yarrowia lipolytica (strain CLIB 122 / E 150) (Yeast).